Consider the following 417-residue polypeptide: Gamma-glutamyl phosphate reductase (417 aa).

It belongs to the gamma-glutamyl phosphate reductase family.

The protein localises to the cytoplasm. The catalysed reaction is L-glutamate 5-semialdehyde + phosphate + NADP(+) = L-glutamyl 5-phosphate + NADPH + H(+). The protein operates within amino-acid biosynthesis; L-proline biosynthesis; L-glutamate 5-semialdehyde from L-glutamate: step 2/2. In terms of biological role, catalyzes the NADPH-dependent reduction of L-glutamate 5-phosphate into L-glutamate 5-semialdehyde and phosphate. The product spontaneously undergoes cyclization to form 1-pyrroline-5-carboxylate. This Escherichia fergusonii (strain ATCC 35469 / DSM 13698 / CCUG 18766 / IAM 14443 / JCM 21226 / LMG 7866 / NBRC 102419 / NCTC 12128 / CDC 0568-73) protein is Gamma-glutamyl phosphate reductase.